A 180-amino-acid polypeptide reads, in one-letter code: Inner membrane-spanning protein YciB (180 aa).

A run of 6 helical transmembrane segments spans residues 4-24 (LLSEIGPVVAFFAGFFYGGGI), 25-45 (QSATLYMLITSVICITLCYII), 52-72 (LSIISTAVLLVSGIITLISGD), 76-96 (IKIKPTILYVIFGIIFLTSGI), 118-138 (ITLSYRTATFFFFMAIVNEIV), and 150-170 (FKVFGVVPITFVFILLQLPLL).

It belongs to the YciB family.

The protein localises to the cell inner membrane. In terms of biological role, plays a role in cell envelope biogenesis, maintenance of cell envelope integrity and membrane homeostasis. This chain is Inner membrane-spanning protein YciB, found in Rickettsia bellii (strain RML369-C).